Reading from the N-terminus, the 141-residue chain is Galactose-6-phosphate isomerase subunit LacA 1 (141 aa).

The protein belongs to the LacAB/RpiB family. As to quaternary structure, heteromultimeric protein consisting of LacA and LacB.

It catalyses the reaction aldehydo-D-galactose 6-phosphate = keto-D-tagatose 6-phosphate. Its pathway is carbohydrate metabolism; D-galactose 6-phosphate degradation; D-tagatose 6-phosphate from D-galactose 6-phosphate: step 1/1. In Streptococcus pyogenes serotype M18 (strain MGAS8232), this protein is Galactose-6-phosphate isomerase subunit LacA 1.